The primary structure comprises 942 residues: E3 ubiquitin-protein ligase HACE1 (942 aa).

7 ANK repeats span residues 23 to 55 (LPDDNETAVYTLMPMVMADQHRSVSELLSNSKF), 64 to 93 (VKRSLLHIAANCGSVECLVLLLKKGANPNY), 97 to 126 (SGCTPLHLAARNGQKKCMSKLLEYSADVNI), 130 to 159 (EGLTAIHWLAVNGRTELLHDLVQHVSNVDV), 163 to 192 (MGQTALHVACQNGHKTTVQCLLDSGADINR), 196 to 226 (SGATPLYFACSHGQRDTAQILLMRGAKYLPD), and 228 to 253 (NGITPLDLCVQGGYGETCEVLIQYHP). The interval 428–459 (KGPDHQDATPTPSFAAAGTESRKELSTDTGDS) is disordered. Over residues 447–459 (ESRKELSTDTGDS) the composition is skewed to basic and acidic residues. Residues 607–942 (NCAKLKQGIA…HCGSYGYTMA (336 aa)) form the HECT domain. C909 functions as the Glycyl thioester intermediate in the catalytic mechanism.

The protein resides in the golgi apparatus. It is found in the golgi stack membrane. The protein localises to the cytoplasm. It localises to the endoplasmic reticulum. The enzyme catalyses S-ubiquitinyl-[E2 ubiquitin-conjugating enzyme]-L-cysteine + [acceptor protein]-L-lysine = [E2 ubiquitin-conjugating enzyme]-L-cysteine + N(6)-ubiquitinyl-[acceptor protein]-L-lysine.. The protein operates within protein modification; protein ubiquitination. E3 ubiquitin-protein ligase involved in Golgi membrane fusion and regulation of small GTPases. Acts as a regulator of Golgi membrane dynamics during the cell cycle: recruited to Golgi membrane by Rab proteins and regulates postmitotic Golgi membrane fusion. Acts by mediating ubiquitination during mitotic Golgi disassembly, ubiquitination serving as a signal for Golgi reassembly later, after cell division. The protein is E3 ubiquitin-protein ligase HACE1 (HACE1) of Gallus gallus (Chicken).